The sequence spans 1073 residues: Pharyngeal muscle protein 2 (1073 aa).

One can recognise an SAP domain in the interval 9 to 43 (INDLRVSELKTELEKRGLSTQGVKVVLTVRLNKAL). Disordered regions lie at residues 59 to 186 (VSPM…PEVV), 207 to 305 (ELKE…SMET), and 337 to 388 (LLED…KSML). Acidic residues predominate over residues 91–111 (EGNDENVLVEEKEEEEEEEDS). Residues 112–127 (HDLQIIEDHELEVPSD) are compositionally biased toward basic and acidic residues. A compositionally biased stretch (acidic residues) spans 128–151 (EKDDTLVEDEEFEEAEQVEPEPEA). 2 stretches are compositionally biased toward basic and acidic residues: residues 156-182 (VEEKPEEKLEEKPEEKLEEKPEEKPVE) and 207-217 (ELKEKPEKEPE). 2 stretches are compositionally biased toward acidic residues: residues 223 to 232 (EPVEQLENEP) and 248 to 265 (QDGEDEFEEDDSSSDIEI). Over residues 277-293 (AEEKVEKKEKKPEEIPH) the composition is skewed to basic and acidic residues. The segment covering 366–386 (ASTPQATPSKAASSSAGSGKS) has biased composition (low complexity). An RRM domain is found at 396 to 478 (TSIWIRGMTP…RVLRVEKVSE (83 aa)). Disordered regions lie at residues 481 to 759 (LTSS…ERRR), 845 to 917 (QEHR…RNLV), and 1015 to 1073 (SQNA…RGNY). Composition is skewed to low complexity over residues 496–505 (EAASTMSTSP) and 513–524 (PVVTTTTTTSAA). Over residues 573–587 (ITFDREEESNRDSRR) the composition is skewed to basic and acidic residues. Residues 588–622 (TIAAAPPARTSRMARSPLRAPLRAARGSESSRSST) are compositionally biased toward low complexity. A compositionally biased stretch (polar residues) spans 674–689 (VTVQQDAPRASYQTEQ). Basic and acidic residues-rich tracts occupy residues 707–727 (VSPDRSEQRRHRDEPPPRRAP) and 742–759 (PPRRQEGARRSEEPERRR). 3 stretches are compositionally biased toward low complexity: residues 901 to 917 (SSSNSNRNSNSGGRNLV), 1015 to 1026 (SQNAATPSTSTS), and 1034 to 1060 (QWQQQSYGSNQHQHHQNNNSSQPSSSN).

As to expression, expressed in most tissues including the hypodermal, muscle, neuronal, vulval and intestinal tissues. Isoform a: Expressed in the pharynx, nerve ring, intestine, neurons and ventral nerve cord.

It localises to the nucleus. Its function is as follows. Involved in pharyngeal muscle development and ensures pharyngeal grinder function during feeding. Plays a role in the defense against the accumulation of ingested live pathogenic bacteria in the intestine. Has a role in the determination of life span. This Caenorhabditis elegans protein is Pharyngeal muscle protein 2.